A 295-amino-acid chain; its full sequence is Autophagy-related protein 37 (295 aa).

Residues 5–103 (VDRVFVHALN…LIDTMHRYAT (99 aa)) form the ACB domain. 2 disordered regions span residues 124 to 162 (NSPS…PLKE) and 174 to 201 (LRSQ…RWQR). Residues 125 to 153 (SPSSSLSSPRPNQSTGAGAQQPQQEPEQA) show a composition bias toward low complexity. Asn-136 carries N-linked (GlcNAc...) asparagine glycosylation. The helical transmembrane segment at 244 to 264 (WLLVKHIFADLVILSVVLLWL) threads the bilayer.

The protein belongs to the ATG37 family.

The protein resides in the peroxisome membrane. In terms of biological role, acyl-CoA binding protein which acts as the peroxisome receptor for pexophagy. Required for both micropexophagy and macropexophagy, but not for the cytoplasm to vacuole transport (Cvt) or autophagy pathways. Required for functional micropexophagic apparatus (MIPA) and relocation of ATG11 to the peroxisome-sequestering arms of the vacuole. Binds palmitoyl-CoA but not oleyl-CoA. This is Autophagy-related protein 37 from Gibberella zeae (strain ATCC MYA-4620 / CBS 123657 / FGSC 9075 / NRRL 31084 / PH-1) (Wheat head blight fungus).